The sequence spans 271 residues: Tryptophan synthase alpha chain (271 aa).

Active-site proton acceptor residues include glutamate 49 and aspartate 60.

It belongs to the TrpA family. Tetramer of two alpha and two beta chains.

It carries out the reaction (1S,2R)-1-C-(indol-3-yl)glycerol 3-phosphate + L-serine = D-glyceraldehyde 3-phosphate + L-tryptophan + H2O. It functions in the pathway amino-acid biosynthesis; L-tryptophan biosynthesis; L-tryptophan from chorismate: step 5/5. In terms of biological role, the alpha subunit is responsible for the aldol cleavage of indoleglycerol phosphate to indole and glyceraldehyde 3-phosphate. The sequence is that of Tryptophan synthase alpha chain from Blochmanniella floridana.